Consider the following 551-residue polypeptide: E3 ubiquitin-protein ligase TRIM8 (551 aa).

Residues 15-56 (CPICLHVFVEPVQLPCKHNFCRGCIGEAWAKDSGLVRCPECN) form an RING-type zinc finger. 2 consecutive B box-type zinc fingers follow at residues 92 to 132 (CVFC…ARGH) and 140 to 182 (VRAW…VCDV). Coiled coils occupy residues 181–249 (DVEI…DLRQ) and 274–295 (ERMQ…KTED). Residues 399–457 (QYGAAGTASSEGQSGQPLGPCSSTQHLVALPGGTQPVHSSPVFPPSQYPNGSTTQQPML) form a disordered region. Polar residues-rich tracts occupy residues 405–424 (TASS…STQH) and 446–456 (YPNGSTTQQPM).

The protein belongs to the TRIM/RBCC family. In terms of assembly, homodimer. Interacts with SOCS1 (via) SH2 domain and SOCS box. Interacts with HSP90AB1; prevents nucleus translocation of phosphorylated STAT3 and HSP90AB1. Interacts with MAP3K7/TAK1. Interacts with PIAS3. Interacts with TICAM1. Interacts with TRIM15; this interaction prevents TRIM8 cytoplasmic translocation. As to expression, high expression in heart, liver, and thymus. Expressed in embryonic CNS, kidney, lens and gut.

It carries out the reaction S-ubiquitinyl-[E2 ubiquitin-conjugating enzyme]-L-cysteine + [acceptor protein]-L-lysine = [E2 ubiquitin-conjugating enzyme]-L-cysteine + N(6)-ubiquitinyl-[acceptor protein]-L-lysine.. The protein operates within protein modification; protein ubiquitination. Functionally, E3 ubiquitin-protein ligase that participates in multiple biological processes including cell survival, differentiation, apoptosis, and in particular, the innate immune response. Participates in the activation of interferon-gamma signaling by promoting proteasomal degradation of the repressor SOCS1. Plays a positive role in the TNFalpha and IL-1beta signaling pathways. Mechanistically, induces the 'Lys-63'-linked polyubiquitination of MAP3K7/TAK1 component leading to the activation of NF-kappa-B. Also modulates STAT3 activity through negative regulation of PIAS3, either by degradation of PIAS3 through the ubiquitin-proteasome pathway or exclusion of PIAS3 from the nucleus. Negatively regulates TLR3/4-mediated innate immune response by catalyzing 'Lys-6'- and 'Lys-33'-linked polyubiquitination of TICAM1 and thereby disrupting the TICAM1-TBK1 interaction. The protein is E3 ubiquitin-protein ligase TRIM8 (Trim8) of Mus musculus (Mouse).